A 66-amino-acid polypeptide reads, in one-letter code: Nigrocin-2ISb (66 aa).

The first 22 residues, 1-22 (MFTLKKSMLLLFFLGTINLSLC), serve as a signal peptide directing secretion. A propeptide spans 23 to 43 (QEERDAEEERRDEDNAKMEEI) (removed in mature form). Cys60 and Cys66 are disulfide-bonded.

As to expression, expressed by the skin glands.

Its subcellular location is the secreted. In terms of biological role, has antimicrobial activity against Gram-negative bacterium E.coli ATCC 8739 (MIC=50 ug), against Gram positive bacteria S.aureus ATCC 6538 (MIC=3.1 ug), methicillin-resistant S.aureus ATCC 43300 (MIC=12.5 ug), B.subtilis ATCC 6633 (MIC=12.5 ug) and against fungus C.albicans ATCC 90028 (MIC=50 ug). The protein is Nigrocin-2ISb of Odorrana ishikawae (Ishikawa's frog).